The chain runs to 80 residues: UPF0154 protein SaurJH1_1431 (80 aa).

The helical transmembrane segment at 4–24 threads the bilayer; sequence WLAIIFIVAALILGLIGGFLL.

The protein belongs to the UPF0154 family.

Its subcellular location is the cell membrane. The chain is UPF0154 protein SaurJH1_1431 from Staphylococcus aureus (strain JH1).